A 170-amino-acid chain; its full sequence is Zinc finger protein 576 (170 aa).

The interval 1–29 is disordered; that stretch reads MEDPNPEENMKQQDSPKERSPQSPGGNIC. Residues 8-20 are compositionally biased toward basic and acidic residues; sequence ENMKQQDSPKERS. 4 C2H2-type zinc fingers span residues 34–57, 71–93, 112–134, and 143–165; these read PKCT…KREH, FICF…QRSH, FPCP…RQMH, and FACT…YIRH.

It belongs to the krueppel C2H2-type zinc-finger protein family.

It is found in the nucleus. Its function is as follows. May be involved in transcriptional regulation. The sequence is that of Zinc finger protein 576 (ZNF576) from Homo sapiens (Human).